Reading from the N-terminus, the 109-residue chain is UPF0122 protein Cbei_1174 (109 aa).

This sequence belongs to the UPF0122 family.

In terms of biological role, might take part in the signal recognition particle (SRP) pathway. This is inferred from the conservation of its genetic proximity to ftsY/ffh. May be a regulatory protein. This chain is UPF0122 protein Cbei_1174, found in Clostridium beijerinckii (strain ATCC 51743 / NCIMB 8052) (Clostridium acetobutylicum).